Consider the following 62-residue polypeptide: Large ribosomal subunit protein bL28 (62 aa).

It belongs to the bacterial ribosomal protein bL28 family.

This Helicobacter pylori (strain P12) protein is Large ribosomal subunit protein bL28.